Consider the following 133-residue polypeptide: Small ribosomal subunit protein uS11 (133 aa).

The protein belongs to the universal ribosomal protein uS11 family. Part of the 30S ribosomal subunit. Interacts with proteins S7 and S18. Binds to IF-3.

Functionally, located on the platform of the 30S subunit, it bridges several disparate RNA helices of the 16S rRNA. Forms part of the Shine-Dalgarno cleft in the 70S ribosome. In Ralstonia pickettii (strain 12J), this protein is Small ribosomal subunit protein uS11.